The primary structure comprises 1019 residues: Insulin-degrading enzyme (1019 aa).

Histidine 108 contacts Zn(2+). The active-site Proton acceptor is glutamate 111. 2 residues coordinate Zn(2+): histidine 112 and glutamate 189. Residue lysine 192 is modified to N6-succinyllysine. Residues 336–342 (HLIGHEG) and 359–363 (LVGGQ) each bind substrate. Position 429 (arginine 429) interacts with ATP. N6-succinyllysine is present on lysine 697. Positions 853–858 (EKPPHY) match the SlyX motif motif. Residue 895–901 (DKPKKLS) participates in ATP binding.

It belongs to the peptidase M16 family. As to quaternary structure, homodimer. Can also form homotetramers. In terms of assembly, (Microbial infection) Interacts (via N-terminus) with varicella-zoster virus (VZV) envelope glycoprotein E (via N-terminus); the membrane-associated isoform may function as an entry receptor for this virus. It depends on Zn(2+) as a cofactor. Post-translationally, the N-terminus is blocked. In terms of tissue distribution, detected in brain and in cerebrospinal fluid (at protein level).

The protein resides in the cytoplasm. It is found in the cytosol. Its subcellular location is the cell membrane. It localises to the secreted. The enzyme catalyses Degradation of insulin, glucagon and other polypeptides. No action on proteins.. Activated by small peptides. Activated by ATP and GTP, and to a lesser extent by CTP, TTP and PPPi. Inhibited by bacitracin. In vitro modification of Cys residues impairs enzyme activity. In terms of biological role, plays a role in the cellular breakdown of insulin, APP peptides, IAPP peptides, natriuretic peptides, glucagon, bradykinin, kallidin, and other peptides, and thereby plays a role in intercellular peptide signaling. Substrate binding induces important conformation changes, making it possible to bind and degrade larger substrates, such as insulin. Contributes to the regulation of peptide hormone signaling cascades and regulation of blood glucose homeostasis via its role in the degradation of insulin, glucagon and IAPP. Plays a role in the degradation and clearance of APP-derived amyloidogenic peptides that are secreted by neurons and microglia. Degrades the natriuretic peptides ANP, BNP and CNP, inactivating their ability to raise intracellular cGMP. Also degrades an aberrant frameshifted 40-residue form of NPPA (fsNPPA) which is associated with familial atrial fibrillation in heterozygous patients. Involved in antigen processing. Produces both the N terminus and the C terminus of MAGEA3-derived antigenic peptide (EVDPIGHLY) that is presented to cytotoxic T lymphocytes by MHC class I. Its function is as follows. (Microbial infection) The membrane-associated isoform acts as an entry receptor for varicella-zoster virus (VZV). This chain is Insulin-degrading enzyme, found in Homo sapiens (Human).